A 54-amino-acid polypeptide reads, in one-letter code: Large ribosomal subunit protein bL33B (54 aa).

This sequence belongs to the bacterial ribosomal protein bL33 family.

The protein is Large ribosomal subunit protein bL33B of Mycobacterium sp. (strain JLS).